Reading from the N-terminus, the 1755-residue chain is Transposon Ty1-BL Gag-Pol polyprotein (1755 aa).

3 stretches are compositionally biased toward polar residues: residues 20-31 (SVTSKEVQTTQD), 46-55 (VSTQANSQQP), and 137-168 (VGTH…TNQH). Disordered stretches follow at residues 20–84 (SVTS…QNGP), 137–173 (VGTH…RPPP), and 350–420 (QQES…IRGS). The interval 299–401 (NNGIPINNKV…NSQSRTARAH (103 aa)) is RNA-binding. A compositionally biased stretch (basic and acidic residues) spans 363-372 (SPSDEKKDSR). Over residues 373 to 411 (TYTNTTKPKSITRNSQKPNNSQSRTARAHNVSTFNNSPG) the composition is skewed to polar residues. Catalysis depends on Asp461, which acts as the For protease activity; shared with dimeric partner. Residues 583-640 (NVHTSESTRKYPYPFIHRMLAHANAQTIRYSLKNNTITYFNESDVDWSSAIDYQCPDC) are integrase-type zinc finger-like. In terms of domain architecture, Integrase catalytic spans 660 to 835 (NSYEPFQYLH…AGLDISTLLP (176 aa)). 2 residues coordinate Mg(2+): Asp671 and Asp736. Positions 956-1172 (SKAVSPTDST…LGGIGDSNAY (217 aa)) are disordered. Positions 960–969 (SPTDSTPPST) are enriched in low complexity. Polar residues-rich tracts occupy residues 1005–1017 (STPQ…STDS) and 1031–1043 (MSQS…SYAS). Residues 1044–1053 (KSKDFRHSDS) show a composition bias toward basic and acidic residues. Polar residues-rich tracts occupy residues 1054–1082 (YSDN…QTSE) and 1095–1106 (SIDTSSSESNSL). The short motif at 1178 to 1212 (KKRSLEDNETEIKVSRDTWNTKNMRSLEPPRSKKR) is the Bipartite nuclear localization signal element. Residues 1338-1476 (NNYHITQLDI…DILGLEIKYQ (139 aa)) form the Reverse transcriptase Ty1/copia-type domain. Residues Asp1346, Asp1427, Asp1428, Asp1610, Glu1652, and Asp1685 each coordinate Mg(2+). An RNase H Ty1/copia-type domain is found at 1610–1752 (DASYGNQPYY…IKTFKLLTNK (143 aa)).

In terms of assembly, the capsid protein forms a homotrimer, from which the VLPs are assembled. The protease is a homodimer, whose active site consists of two apposed aspartic acid residues. In terms of processing, initially, virus-like particles (VLPs) are composed of the structural unprocessed proteins Gag and Gag-Pol, and also contain the host initiator methionine tRNA (tRNA(i)-Met) which serves as a primer for minus-strand DNA synthesis, and a dimer of genomic Ty RNA. Processing of the polyproteins occurs within the particle and proceeds by an ordered pathway, called maturation. First, the protease (PR) is released by autocatalytic cleavage of the Gag-Pol polyprotein yielding capsid protein p45 and a Pol-p154 precursor protein. This cleavage is a prerequisite for subsequent processing of Pol-p154 at the remaining sites to release the mature structural and catalytic proteins. Maturation takes place prior to the RT reaction and is required to produce transposition-competent VLPs.

Its subcellular location is the cytoplasm. The protein localises to the nucleus. It catalyses the reaction DNA(n) + a 2'-deoxyribonucleoside 5'-triphosphate = DNA(n+1) + diphosphate. It carries out the reaction Endonucleolytic cleavage to 5'-phosphomonoester.. Its function is as follows. Capsid protein (CA) is the structural component of the virus-like particle (VLP), forming the shell that encapsulates the retrotransposons dimeric RNA genome. The particles are assembled from trimer-clustered units and there are holes in the capsid shells that allow for the diffusion of macromolecules. CA also has nucleocapsid-like chaperone activity, promoting primer tRNA(i)-Met annealing to the multipartite primer-binding site (PBS), dimerization of Ty1 RNA and initiation of reverse transcription. The aspartyl protease (PR) mediates the proteolytic cleavages of the Gag and Gag-Pol polyproteins after assembly of the VLP. In terms of biological role, reverse transcriptase/ribonuclease H (RT) is a multifunctional enzyme that catalyzes the conversion of the retro-elements RNA genome into dsDNA within the VLP. The enzyme displays a DNA polymerase activity that can copy either DNA or RNA templates, and a ribonuclease H (RNase H) activity that cleaves the RNA strand of RNA-DNA heteroduplexes during plus-strand synthesis and hydrolyzes RNA primers. The conversion leads to a linear dsDNA copy of the retrotransposon that includes long terminal repeats (LTRs) at both ends. Functionally, integrase (IN) targets the VLP to the nucleus, where a subparticle preintegration complex (PIC) containing at least integrase and the newly synthesized dsDNA copy of the retrotransposon must transit the nuclear membrane. Once in the nucleus, integrase performs the integration of the dsDNA into the host genome. This chain is Transposon Ty1-BL Gag-Pol polyprotein (TY1B-BL), found in Saccharomyces cerevisiae (strain ATCC 204508 / S288c) (Baker's yeast).